Consider the following 105-residue polypeptide: Small ribosomal subunit protein uS10 (105 aa).

Belongs to the universal ribosomal protein uS10 family. In terms of assembly, part of the 30S ribosomal subunit.

Its function is as follows. Involved in the binding of tRNA to the ribosomes. The chain is Small ribosomal subunit protein uS10 from Legionella pneumophila (strain Paris).